A 424-amino-acid polypeptide reads, in one-letter code: ATP-dependent RNA helicase WM6 (424 aa).

Residues 1-16 (MADNDDLLDYEDEEQT) are compositionally biased toward acidic residues. The segment at 1 to 27 (MADNDDLLDYEDEEQTETTAVENQEAP) is disordered. A Q motif motif is present at residues 41–69 (SGFRDFLLKPEILRAIVDCGFEHPSEVQH). Residues 72 to 246 (IPQAVLGMDI…KKFMQDPMEV (175 aa)) enclose the Helicase ATP-binding domain. 85–92 (AKSGMGKT) is an ATP binding site. Residues 193–196 (DECD) carry the DECD box motif. In terms of domain architecture, Helicase C-terminal spans 258-419 (GLQQHYVNLK…ELPEEIDLST (162 aa)).

Belongs to the DEAD box helicase family. DECD subfamily. As to quaternary structure, component of the spliceosome. Interacts with the exon junction complex.

It localises to the nucleus speckle. The enzyme catalyses ATP + H2O = ADP + phosphate + H(+). Required for mRNA export out of the nucleus. Probable RNA helicase that may regulate entry into mitosis by down-regulating the expression of other genes whose activity may be rate-limiting for entry into mitosis during embryogenesis. Binds to salivary gland chromosomes and modifies position effect variegation. Promotes an open chromatin structure that favors transcription during development by regulating the spread of heterochromatin. This chain is ATP-dependent RNA helicase WM6 (Hel25E), found in Drosophila melanogaster (Fruit fly).